A 172-amino-acid chain; its full sequence is 3-hydroxydecanoyl-[acyl-carrier-protein] dehydratase (172 aa).

H71 is a catalytic residue.

The protein belongs to the thioester dehydratase family. FabA subfamily. In terms of assembly, homodimer.

It localises to the cytoplasm. It catalyses the reaction a (3R)-hydroxyacyl-[ACP] = a (2E)-enoyl-[ACP] + H2O. The enzyme catalyses (3R)-hydroxydecanoyl-[ACP] = (2E)-decenoyl-[ACP] + H2O. The catalysed reaction is (2E)-decenoyl-[ACP] = (3Z)-decenoyl-[ACP]. The protein operates within lipid metabolism; fatty acid biosynthesis. Its function is as follows. Necessary for the introduction of cis unsaturation into fatty acids. Catalyzes the dehydration of (3R)-3-hydroxydecanoyl-ACP to E-(2)-decenoyl-ACP and then its isomerization to Z-(3)-decenoyl-ACP. Can catalyze the dehydratase reaction for beta-hydroxyacyl-ACPs with saturated chain lengths up to 16:0, being most active on intermediate chain length. In Escherichia coli O6:K15:H31 (strain 536 / UPEC), this protein is 3-hydroxydecanoyl-[acyl-carrier-protein] dehydratase.